The following is a 427-amino-acid chain: L-glutamine:2-deoxy-scyllo-inosose aminotransferase (427 aa).

The tract at residues 1 to 20 (MPLQSSRLAVDNGTPVRGKP) is disordered. Residue lysine 205 is modified to N6-(pyridoxal phosphate)lysine.

It belongs to the DegT/DnrJ/EryC1 family. L-glutamine:2-deoxy-scyllo-inosose/scyllo-inosose aminotransferase subfamily. Pyridoxal 5'-phosphate serves as cofactor.

It carries out the reaction 2-deoxy-L-scyllo-inosose + L-glutamine = 2-deoxy-scyllo-inosamine + 2-oxoglutaramate. It catalyses the reaction 3-amino-2,3-dideoxy-scyllo-inosose + L-glutamine = 2-deoxystreptamine + 2-oxoglutaramate. It functions in the pathway metabolic intermediate biosynthesis; 2-deoxystreptamine biosynthesis; 2-deoxystreptamine from D-glucose 6-phosphate: step 2/4. The protein operates within antibiotic biosynthesis; kanamycin biosynthesis. Catalyzes the PLP-dependent transamination of 2-deoxy-scyllo-inosose (2-DOI) to form 2-deoxy-scyllo-inosamine (2-DOIA) using L-glutamine as the amino donor. Also catalyzes the transamination of 3-amino-2,3-dideoxy-scyllo-inosose (keto-2-DOIA) into 2-deoxystreptamine (2-DOS). In Streptomyces kanamyceticus, this protein is L-glutamine:2-deoxy-scyllo-inosose aminotransferase (kanB).